Reading from the N-terminus, the 196-residue chain is Probable GTP-binding protein EngB (196 aa).

Residues 22-193 (SLPEVAFVGR…LEEIRKAKGE (172 aa)) enclose the EngB-type G domain. GTP-binding positions include 30 to 37 (GRSNVGKS), 57 to 61 (GRTQL), 75 to 78 (DLPG), 142 to 145 (TKSD), and 172 to 174 (FSA). Positions 37 and 59 each coordinate Mg(2+).

The protein belongs to the TRAFAC class TrmE-Era-EngA-EngB-Septin-like GTPase superfamily. EngB GTPase family. Mg(2+) serves as cofactor.

Functionally, necessary for normal cell division and for the maintenance of normal septation. The protein is Probable GTP-binding protein EngB of Syntrophus aciditrophicus (strain SB).